We begin with the raw amino-acid sequence, 174 residues long: Peptidyl-prolyl cis-trans isomerase-like 1 (174 aa).

In terms of domain architecture, PPIase cyclophilin-type spans 5–159 (SPTYVTFDTS…EEIKIHRARL (155 aa)).

Belongs to the cyclophilin-type PPIase family. PPIL1 subfamily.

The enzyme catalyses [protein]-peptidylproline (omega=180) = [protein]-peptidylproline (omega=0). In terms of biological role, PPIases accelerate the folding of proteins. It catalyzes the cis-trans isomerization of proline imidic peptide bonds in oligopeptides. The polypeptide is Peptidyl-prolyl cis-trans isomerase-like 1 (CYP1) (Cryptococcus neoformans var. neoformans serotype D (strain B-3501A) (Filobasidiella neoformans)).